The following is a 266-amino-acid chain: Exosome complex component Rrp42 (266 aa).

The protein belongs to the RNase PH family. Rrp42 subfamily. In terms of assembly, component of the archaeal exosome complex. Forms a hexameric ring-like arrangement composed of 3 Rrp41-Rrp42 heterodimers. The hexameric ring associates with a trimer of Rrp4 and/or Csl4 subunits.

It is found in the cytoplasm. Non-catalytic component of the exosome, which is a complex involved in RNA degradation. Contributes to the structuring of the Rrp41 active site. The polypeptide is Exosome complex component Rrp42 (Methanosarcina mazei (strain ATCC BAA-159 / DSM 3647 / Goe1 / Go1 / JCM 11833 / OCM 88) (Methanosarcina frisia)).